The chain runs to 146 residues: Monothiol glutaredoxin-5, mitochondrial (146 aa).

The Glutaredoxin domain maps to 26–131 (RQALEQAVKE…KILKEINALA (106 aa)). K43 is a binding site for glutathione. Residue C51 participates in [2Fe-2S] cluster binding. Glutathione is bound by residues 83 to 87 (REGIK), I95, and 108 to 109 (SD).

The protein belongs to the glutaredoxin family. Monothiol subfamily. As to quaternary structure, homodimer. Interacts with ISA1 and ISA2.

Its subcellular location is the mitochondrion. In terms of biological role, monothiol glutaredoxin involved in mitochondrial iron-sulfur (Fe/S) cluster transfer. Receives 2Fe/2S clusters from scaffold protein isu1 and mediates their transfer to apoproteins, to the 4Fe/FS cluster biosynthesis machinery, or export from mitochondrion. The polypeptide is Monothiol glutaredoxin-5, mitochondrial (Schizosaccharomyces pombe (strain 972 / ATCC 24843) (Fission yeast)).